The chain runs to 224 residues: Putative ribonuclease Z (224 aa).

Positions 120 and 184 each coordinate Zn(2+).

The protein belongs to the RNase Z family. Homodimer. Requires Zn(2+) as cofactor.

It carries out the reaction Endonucleolytic cleavage of RNA, removing extra 3' nucleotides from tRNA precursor, generating 3' termini of tRNAs. A 3'-hydroxy group is left at the tRNA terminus and a 5'-phosphoryl group is left at the trailer molecule.. Functionally, zinc phosphodiesterase, which displays some tRNA 3'-processing endonuclease activity. Probably involved in tRNA maturation, by removing a 3'-trailer from precursor tRNA. This Mycobacterium tuberculosis (strain CDC 1551 / Oshkosh) protein is Putative ribonuclease Z (rnz).